The primary structure comprises 116 residues: Large ribosomal subunit protein bL17 (116 aa).

This sequence belongs to the bacterial ribosomal protein bL17 family. Part of the 50S ribosomal subunit. Contacts protein L32.

In Chloroflexus aurantiacus (strain ATCC 29366 / DSM 635 / J-10-fl), this protein is Large ribosomal subunit protein bL17.